The sequence spans 197 residues: Large ribosomal subunit protein uL13C (197 aa).

It belongs to the universal ribosomal protein uL13 family. Component of the large ribosomal subunit (LSU). Mature yeast ribosomes consist of a small (40S) and a large (60S) subunit. The 40S small subunit contains 1 molecule of ribosomal RNA (18S rRNA) and at least 33 different proteins. The large 60S subunit contains 3 rRNA molecules (25S, 5.8S and 5S rRNA) and at least 46 different proteins.

The protein resides in the cytoplasm. It is found in the nucleus. The protein localises to the nucleolus. Component of the ribosome, a large ribonucleoprotein complex responsible for the synthesis of proteins in the cell. The small ribosomal subunit (SSU) binds messenger RNAs (mRNAs) and translates the encoded message by selecting cognate aminoacyl-transfer RNA (tRNA) molecules. The large subunit (LSU) contains the ribosomal catalytic site termed the peptidyl transferase center (PTC), which catalyzes the formation of peptide bonds, thereby polymerizing the amino acids delivered by tRNAs into a polypeptide chain. The nascent polypeptides leave the ribosome through a tunnel in the LSU and interact with protein factors that function in enzymatic processing, targeting, and the membrane insertion of nascent chains at the exit of the ribosomal tunnel. This is Large ribosomal subunit protein uL13C (rpl1603) from Schizosaccharomyces pombe (strain 972 / ATCC 24843) (Fission yeast).